Here is a 100-residue protein sequence, read N- to C-terminus: Envelope glycoprotein N (100 aa).

The N-terminal stretch at M1–G27 is a signal peptide. The Virion surface portion of the chain corresponds to D28 to T63. The helical transmembrane segment at A64 to Y84 threads the bilayer. The Intravirion portion of the chain corresponds to R85–H100.

Belongs to the herpesviridae glycoprotein N family. In terms of assembly, interacts (via N-terminus) with gM (via N-terminus). The gM-gN heterodimer forms the gCII complex.

The protein resides in the virion membrane. It is found in the host membrane. The protein localises to the host Golgi apparatus. Its subcellular location is the host trans-Golgi network. Its function is as follows. Envelope glycoprotein necessary for proper maturation of gM and modulation of its membrane fusion activity. Also plays a critical role in virion morphogenesis. The polypeptide is Envelope glycoprotein N (Equus caballus (Horse)).